A 310-amino-acid chain; its full sequence is MVGRFVMETLRGRDLLSIADLSRAEAEYLLDLAAQMKIGKVAPQCPKVLGLLFQKASTRTRVSFTVAMYQLGGQVIDLNPQSTQVGRGEPLTDTARVLDRYLDAVAIRTYGQAELQLFADYARIPVINALTDREHPCQILADLLTLRESFGTLAGLTLCYIGDGNNVAHSLLLGCALLGVNIRVASPPQFAPLADIVAQAKALSGGKSEVAVLTDPQAAAKGAHALYTDVWASMGQEAEAGDRQPIFQPYQINDHLLALADPRAIVLHCLPAHRDEEITASVLEGPQSRVWEQAENRLHVQKALLASLLV.

Residues serine 57–threonine 60, glutamine 84, arginine 108, and histidine 135–glutamine 138 each bind carbamoyl phosphate. Residues asparagine 166, aspartate 229, and serine 233–methionine 234 each bind L-ornithine. Carbamoyl phosphate-binding positions include cysteine 269 to leucine 270 and arginine 297.

Belongs to the aspartate/ornithine carbamoyltransferase superfamily. OTCase family.

It localises to the cytoplasm. The catalysed reaction is carbamoyl phosphate + L-ornithine = L-citrulline + phosphate + H(+). It participates in amino-acid biosynthesis; L-arginine biosynthesis; L-arginine from L-ornithine and carbamoyl phosphate: step 1/3. Reversibly catalyzes the transfer of the carbamoyl group from carbamoyl phosphate (CP) to the N(epsilon) atom of ornithine (ORN) to produce L-citrulline. The protein is Ornithine carbamoyltransferase of Thermosynechococcus vestitus (strain NIES-2133 / IAM M-273 / BP-1).